Reading from the N-terminus, the 297-residue chain is UDP-N-acetylglucosamine transporter TMEM241 (297 aa).

The next 10 membrane-spanning stretches (helical) occupy residues 7-29 (LLGL…VLSV), 32-52 (FTYP…LLHM), 69-89 (VLIW…GSKA), 93-113 (LAVP…CGYQ), 121-141 (TSLS…CLPF), 146-166 (FDPD…SYKI), 187-207 (IFSM…FGAL), 211-231 (FLYF…GFFL), 250-270 (WILC…DMAL), and 271-291 (TKAT…LVFS).

The protein belongs to the nucleotide-sugar transporter family. SLC35A subfamily. As to expression, widely expressed with high expression in lung.

The protein resides in the golgi apparatus. Its subcellular location is the cis-Golgi network membrane. Golgi-localized UDP-N-acetylglucosamine (UDP-GlcNAc) transporter that transports UDP-N-acetylglucosamine into Golgi lumen. Contributes to lysosomal targeting of NPC2, a key protein required for lysosomal cholesterol exiting, and that utilizes the mannose-6-phosphate (M6P) modification pathway for its lysosomal targeting. The chain is UDP-N-acetylglucosamine transporter TMEM241 (Tmem241) from Mus musculus (Mouse).